The following is a 224-amino-acid chain: Ribonuclease HII (224 aa).

One can recognise an RNase H type-2 domain in the interval 33-224 (FHVAGVDEVG…LKERYRNDVS (192 aa)). The a divalent metal cation site is built by Asp-39, Glu-40, and Asp-131.

It belongs to the RNase HII family. Requires Mn(2+) as cofactor. Mg(2+) is required as a cofactor.

The protein resides in the cytoplasm. It catalyses the reaction Endonucleolytic cleavage to 5'-phosphomonoester.. Endonuclease that specifically degrades the RNA of RNA-DNA hybrids. The chain is Ribonuclease HII from Bartonella tribocorum (strain CIP 105476 / IBS 506).